Consider the following 278-residue polypeptide: Ribosomal protein L11 methyltransferase (278 aa).

Residues Thr131, Gly152, Asp173, and Asn214 each coordinate S-adenosyl-L-methionine.

The protein belongs to the methyltransferase superfamily. PrmA family.

Its subcellular location is the cytoplasm. It carries out the reaction L-lysyl-[protein] + 3 S-adenosyl-L-methionine = N(6),N(6),N(6)-trimethyl-L-lysyl-[protein] + 3 S-adenosyl-L-homocysteine + 3 H(+). Methylates ribosomal protein L11. In Campylobacter lari (strain RM2100 / D67 / ATCC BAA-1060), this protein is Ribosomal protein L11 methyltransferase.